An 888-amino-acid chain; its full sequence is DNA mismatch repair protein MutS (888 aa).

641–648 serves as a coordination point for ATP; the sequence is GPNMAGKS.

This sequence belongs to the DNA mismatch repair MutS family.

Its function is as follows. This protein is involved in the repair of mismatches in DNA. It is possible that it carries out the mismatch recognition step. This protein has a weak ATPase activity. The chain is DNA mismatch repair protein MutS from Rickettsia bellii (strain RML369-C).